Reading from the N-terminus, the 236-residue chain is MNSLSFLNHEFEAFPSPELALTDPNGLLAIGGDLRPERLLTAYYHGIFPWFNADDPILWWSPDPRAIFIPGQVNISTSLRKYLKKQPWHFTINHAFTDVMAGCAQPRRKQAGTWITHEIQMAYRELHHNGHAHSVEVWHGERLIGGLYGLAIGQVFCGESMFHRETNASKAAMLLLQQHLINMDFKLIDAQVMNPHLESLGAKPVKRANFIQLLTQFRDNTANPAAWIPSEVTLEL.

The protein belongs to the L/F-transferase family.

The protein resides in the cytoplasm. It carries out the reaction N-terminal L-lysyl-[protein] + L-leucyl-tRNA(Leu) = N-terminal L-leucyl-L-lysyl-[protein] + tRNA(Leu) + H(+). The enzyme catalyses N-terminal L-arginyl-[protein] + L-leucyl-tRNA(Leu) = N-terminal L-leucyl-L-arginyl-[protein] + tRNA(Leu) + H(+). The catalysed reaction is L-phenylalanyl-tRNA(Phe) + an N-terminal L-alpha-aminoacyl-[protein] = an N-terminal L-phenylalanyl-L-alpha-aminoacyl-[protein] + tRNA(Phe). Its function is as follows. Functions in the N-end rule pathway of protein degradation where it conjugates Leu, Phe and, less efficiently, Met from aminoacyl-tRNAs to the N-termini of proteins containing an N-terminal arginine or lysine. This chain is Leucyl/phenylalanyl-tRNA--protein transferase, found in Shewanella sp. (strain MR-7).